The following is a 326-amino-acid chain: NAD kinase (326 aa).

D93 (proton acceptor) is an active-site residue. NAD(+) contacts are provided by residues 93-94 (DG), R98, 171-172 (NE), R182, D201, and 212-217 (TAHAFS).

It belongs to the NAD kinase family. A divalent metal cation serves as cofactor.

It is found in the cytoplasm. The catalysed reaction is NAD(+) + ATP = ADP + NADP(+) + H(+). Its function is as follows. Involved in the regulation of the intracellular balance of NAD and NADP, and is a key enzyme in the biosynthesis of NADP. Catalyzes specifically the phosphorylation on 2'-hydroxyl of the adenosine moiety of NAD to yield NADP. In Thermobifida fusca (strain YX), this protein is NAD kinase.